The chain runs to 112 residues: Small ribosomal subunit protein bS6 (112 aa).

It belongs to the bacterial ribosomal protein bS6 family.

Binds together with bS18 to 16S ribosomal RNA. The polypeptide is Small ribosomal subunit protein bS6 (Azobacteroides pseudotrichonymphae genomovar. CFP2).